The chain runs to 571 residues: Proline--tRNA ligase (571 aa).

This sequence belongs to the class-II aminoacyl-tRNA synthetase family. ProS type 1 subfamily. In terms of assembly, homodimer.

Its subcellular location is the cytoplasm. It catalyses the reaction tRNA(Pro) + L-proline + ATP = L-prolyl-tRNA(Pro) + AMP + diphosphate. Its function is as follows. Catalyzes the attachment of proline to tRNA(Pro) in a two-step reaction: proline is first activated by ATP to form Pro-AMP and then transferred to the acceptor end of tRNA(Pro). As ProRS can inadvertently accommodate and process non-cognate amino acids such as alanine and cysteine, to avoid such errors it has two additional distinct editing activities against alanine. One activity is designated as 'pretransfer' editing and involves the tRNA(Pro)-independent hydrolysis of activated Ala-AMP. The other activity is designated 'posttransfer' editing and involves deacylation of mischarged Ala-tRNA(Pro). The misacylated Cys-tRNA(Pro) is not edited by ProRS. The chain is Proline--tRNA ligase from Shewanella baltica (strain OS185).